The sequence spans 428 residues: Arginine biosynthesis bifunctional protein ArgJ, mitochondrial (428 aa).

Substrate is bound by residues threonine 171, lysine 197, threonine 208, glutamate 294, asparagine 423, and serine 428. Residue threonine 208 is the Nucleophile of the active site.

The protein belongs to the ArgJ family. Heterodimer of an alpha and a beta chain. The alpha and beta chains are autoproteolytically processed from a single precursor protein within the mitochondrion.

The protein localises to the mitochondrion matrix. It catalyses the reaction N(2)-acetyl-L-ornithine + L-glutamate = N-acetyl-L-glutamate + L-ornithine. The enzyme catalyses L-glutamate + acetyl-CoA = N-acetyl-L-glutamate + CoA + H(+). It participates in amino-acid biosynthesis; L-arginine biosynthesis; L-ornithine and N-acetyl-L-glutamate from L-glutamate and N(2)-acetyl-L-ornithine (cyclic): step 1/1. Its pathway is amino-acid biosynthesis; L-arginine biosynthesis; N(2)-acetyl-L-ornithine from L-glutamate: step 1/4. Catalyzes two activities which are involved in the cyclic version of arginine biosynthesis: the synthesis of acetylglutamate from glutamate and acetyl-CoA, and of ornithine by transacetylation between acetylornithine and glutamate. In Komagataella phaffii (strain GS115 / ATCC 20864) (Yeast), this protein is Arginine biosynthesis bifunctional protein ArgJ, mitochondrial.